Reading from the N-terminus, the 314-residue chain is Aspartate carbamoyltransferase catalytic subunit (314 aa).

Carbamoyl phosphate is bound by residues Arg-58 and Thr-59. Lys-86 lines the L-aspartate pocket. Carbamoyl phosphate is bound by residues Arg-108, His-136, and Gln-139. Residues Arg-169 and Arg-223 each contribute to the L-aspartate site. Residues Gly-264 and Pro-265 each coordinate carbamoyl phosphate.

This sequence belongs to the aspartate/ornithine carbamoyltransferase superfamily. ATCase family. Heterododecamer (2C3:3R2) of six catalytic PyrB chains organized as two trimers (C3), and six regulatory PyrI chains organized as three dimers (R2).

It catalyses the reaction carbamoyl phosphate + L-aspartate = N-carbamoyl-L-aspartate + phosphate + H(+). It participates in pyrimidine metabolism; UMP biosynthesis via de novo pathway; (S)-dihydroorotate from bicarbonate: step 2/3. In terms of biological role, catalyzes the condensation of carbamoyl phosphate and aspartate to form carbamoyl aspartate and inorganic phosphate, the committed step in the de novo pyrimidine nucleotide biosynthesis pathway. This Roseobacter denitrificans (strain ATCC 33942 / OCh 114) (Erythrobacter sp. (strain OCh 114)) protein is Aspartate carbamoyltransferase catalytic subunit.